The sequence spans 239 residues: 1-(5-phosphoribosyl)-5-[(5-phosphoribosylamino)methylideneamino] imidazole-4-carboxamide isomerase (239 aa).

Aspartate 8 (proton acceptor) is an active-site residue. The Proton donor role is filled by aspartate 129.

Belongs to the HisA/HisF family.

The protein localises to the cytoplasm. It carries out the reaction 1-(5-phospho-beta-D-ribosyl)-5-[(5-phospho-beta-D-ribosylamino)methylideneamino]imidazole-4-carboxamide = 5-[(5-phospho-1-deoxy-D-ribulos-1-ylimino)methylamino]-1-(5-phospho-beta-D-ribosyl)imidazole-4-carboxamide. Its pathway is amino-acid biosynthesis; L-histidine biosynthesis; L-histidine from 5-phospho-alpha-D-ribose 1-diphosphate: step 4/9. The protein is 1-(5-phosphoribosyl)-5-[(5-phosphoribosylamino)methylideneamino] imidazole-4-carboxamide isomerase of Bacillus cereus (strain B4264).